The sequence spans 451 residues: UPF0210 protein LMHCC_2097 (451 aa).

The protein belongs to the UPF0210 family. In terms of assembly, homodimer.

The protein is UPF0210 protein LMHCC_2097 of Listeria monocytogenes serotype 4a (strain HCC23).